The chain runs to 78 residues: NEDD8-like protein RUB3 (78 aa).

Gly-76 is covalently cross-linked (Glycyl lysine isopeptide (Gly-Lys) (interchain with K-? in acceptor proteins)). The propeptide occupies 77 to 78 (CC).

In terms of tissue distribution, detected in stems and flower buds, but not in leaves, mature flowers and seedlings.

In terms of biological role, may function as a stable post-translational protein modifier. This chain is NEDD8-like protein RUB3 (RUB3), found in Arabidopsis thaliana (Mouse-ear cress).